We begin with the raw amino-acid sequence, 504 residues long: Arabinose import ATP-binding protein AraG (504 aa).

2 consecutive ABC transporter domains span residues 8–243 and 256–499; these read LSFR…MVGR and YGEE…MPKV. Residue 40-47 participates in ATP binding; that stretch reads GENGAGKS.

The protein belongs to the ABC transporter superfamily. Arabinose importer (TC 3.A.1.2.2) family. As to quaternary structure, the complex is composed of two ATP-binding proteins (AraG), two transmembrane proteins (AraH) and a solute-binding protein (AraF).

Its subcellular location is the cell inner membrane. The catalysed reaction is L-arabinose(out) + ATP + H2O = L-arabinose(in) + ADP + phosphate + H(+). In terms of biological role, part of the ABC transporter complex AraFGH involved in arabinose import. Responsible for energy coupling to the transport system. The polypeptide is Arabinose import ATP-binding protein AraG (Shigella dysenteriae serotype 1 (strain Sd197)).